A 288-amino-acid polypeptide reads, in one-letter code: Elongation factor Ts (288 aa).

The tract at residues T79–V82 is involved in Mg(2+) ion dislocation from EF-Tu.

It belongs to the EF-Ts family.

The protein localises to the cytoplasm. Functionally, associates with the EF-Tu.GDP complex and induces the exchange of GDP to GTP. It remains bound to the aminoacyl-tRNA.EF-Tu.GTP complex up to the GTP hydrolysis stage on the ribosome. This Ehrlichia ruminantium (strain Gardel) protein is Elongation factor Ts.